The sequence spans 207 residues: Recombination protein RecR (207 aa).

The C4-type zinc finger occupies 60 to 75; sequence CRRCHNISDSGVCTIC. The region spanning 83–178 is the Toprim domain; the sequence is STLCVVENIR…RVSVIARGIA (96 aa).

It belongs to the RecR family.

May play a role in DNA repair. It seems to be involved in an RecBC-independent recombinational process of DNA repair. It may act with RecF and RecO. This is Recombination protein RecR from Porphyromonas gingivalis (strain ATCC 33277 / DSM 20709 / CIP 103683 / JCM 12257 / NCTC 11834 / 2561).